A 290-amino-acid polypeptide reads, in one-letter code: 33 kDa chaperonin (290 aa).

Disulfide bonds link cysteine 235–cysteine 237 and cysteine 268–cysteine 271.

This sequence belongs to the HSP33 family. Under oxidizing conditions two disulfide bonds are formed involving the reactive cysteines. Under reducing conditions zinc is bound to the reactive cysteines and the protein is inactive.

The protein resides in the cytoplasm. In terms of biological role, redox regulated molecular chaperone. Protects both thermally unfolding and oxidatively damaged proteins from irreversible aggregation. Plays an important role in the bacterial defense system toward oxidative stress. This Streptococcus pneumoniae (strain CGSP14) protein is 33 kDa chaperonin.